Reading from the N-terminus, the 349-residue chain is GTPase Obg (349 aa).

The region spanning methionine 1 to isoleucine 159 is the Obg domain. The OBG-type G domain occupies alanine 160–glycine 327. GTP contacts are provided by residues glycine 166–serine 173, phenylalanine 191–histidine 195, aspartate 212–glycine 215, asparagine 279–aspartate 282, and serine 308–valine 310. Residues serine 173 and threonine 193 each contribute to the Mg(2+) site.

Belongs to the TRAFAC class OBG-HflX-like GTPase superfamily. OBG GTPase family. In terms of assembly, monomer. The cofactor is Mg(2+).

Its subcellular location is the cytoplasm. In terms of biological role, an essential GTPase which binds GTP, GDP and possibly (p)ppGpp with moderate affinity, with high nucleotide exchange rates and a fairly low GTP hydrolysis rate. Plays a role in control of the cell cycle, stress response, ribosome biogenesis and in those bacteria that undergo differentiation, in morphogenesis control. This chain is GTPase Obg, found in Rhodopseudomonas palustris (strain BisB18).